The following is a 310-amino-acid chain: Nucleotide-binding protein Ddes_0972 (310 aa).

Residue 30–37 participates in ATP binding; it reads GLSGAGKS. Residue 82–85 coordinates GTP; sequence DLRQ.

It belongs to the RapZ-like family.

Displays ATPase and GTPase activities. The protein is Nucleotide-binding protein Ddes_0972 of Desulfovibrio desulfuricans (strain ATCC 27774 / DSM 6949 / MB).